The following is a 363-amino-acid chain: Ribosomal RNA large subunit methyltransferase M (363 aa).

S-adenosyl-L-methionine-binding positions include Ser194, 227–230, Asp246, Asp266, and Asp284; that span reads CPGG. The Proton acceptor role is filled by Lys313.

This sequence belongs to the class I-like SAM-binding methyltransferase superfamily. RNA methyltransferase RlmE family. RlmM subfamily. In terms of assembly, monomer.

The protein localises to the cytoplasm. The enzyme catalyses cytidine(2498) in 23S rRNA + S-adenosyl-L-methionine = 2'-O-methylcytidine(2498) in 23S rRNA + S-adenosyl-L-homocysteine + H(+). Catalyzes the 2'-O-methylation at nucleotide C2498 in 23S rRNA. The protein is Ribosomal RNA large subunit methyltransferase M of Haemophilus influenzae (strain ATCC 51907 / DSM 11121 / KW20 / Rd).